Consider the following 123-residue polypeptide: Glycophorin-B (123 aa).

An N-terminal signal peptide occupies residues 1-19 (MYGKIIFVLLLSEIVSISA). A helical membrane pass occupies residues 93 to 113 (VVIILIILCVMAGVIGTILLI).

Belongs to the glycophorin-A family. Component of the ankyrin-1 complex in the erythrocyte, composed of ANK1, RHCE, RHAG, SLC4A1, EPB42, GYPA, GYPB and AQP1. Interacts (via the N-terminal) with RHAG; this interaction bridges the (RHAG)2(RHCE) heterotrimer with the SLC4A1 Band 3 I dimer complexed with GYPA. In terms of processing, the N-terminal extracellular domain is heavily glycosylated on serine and threonine residues.

Its subcellular location is the cell membrane. Functionally, component of the ankyrin-1 complex, a multiprotein complex involved in the stability and shape of the erythrocyte membrane. This Pan troglodytes (Chimpanzee) protein is Glycophorin-B.